Reading from the N-terminus, the 223-residue chain is Urease accessory protein UreF (223 aa).

Belongs to the UreF family. In terms of assembly, ureD, UreF and UreG form a complex that acts as a GTP-hydrolysis-dependent molecular chaperone, activating the urease apoprotein by helping to assemble the nickel containing metallocenter of UreC. The UreE protein probably delivers the nickel.

Its subcellular location is the cytoplasm. Its function is as follows. Required for maturation of urease via the functional incorporation of the urease nickel metallocenter. The polypeptide is Urease accessory protein UreF (Pseudomonas aeruginosa (strain LESB58)).